A 332-amino-acid polypeptide reads, in one-letter code: NH(3)-dependent NAD(+) synthetase (332 aa).

48-55 (GLSGGVDS) provides a ligand contact to ATP. D54 provides a ligand contact to Mg(2+). R184 contacts deamido-NAD(+). T204 provides a ligand contact to ATP. E209 is a binding site for Mg(2+). Deamido-NAD(+) is bound by residues K217 and D224. ATP-binding residues include K233 and T255.

The protein belongs to the NAD synthetase family. As to quaternary structure, homodimer.

It catalyses the reaction deamido-NAD(+) + NH4(+) + ATP = AMP + diphosphate + NAD(+) + H(+). It functions in the pathway cofactor biosynthesis; NAD(+) biosynthesis; NAD(+) from deamido-NAD(+) (ammonia route): step 1/1. In terms of biological role, catalyzes the ATP-dependent amidation of deamido-NAD to form NAD. Uses ammonia as a nitrogen source. The chain is NH(3)-dependent NAD(+) synthetase from Rhizobium rhizogenes (strain K84 / ATCC BAA-868) (Agrobacterium radiobacter).